A 215-amino-acid chain; its full sequence is UPF0319 protein VVA1446 (215 aa).

A signal peptide spans 1–21 (MNIIKPLTCILAMSISGLATA).

It belongs to the UPF0319 family.

In Vibrio vulnificus (strain YJ016), this protein is UPF0319 protein VVA1446.